A 697-amino-acid polypeptide reads, in one-letter code: PAN2-PAN3 deadenylation complex subunit PAN3 (697 aa).

The C3H1-type zinc finger occupies 7 to 36; sequence TAKDTLCKNILIYGYCKYENKGCAFSHNRQ. The tract at residues 40–67 is disordered; that stretch reads QQQQATNTSNNSTSVITPNSANSTASSA. 2 consecutive short sequence motifs (PABPC-interacting motif-2 (PAM-2)) follow at residues 69 to 89 and 106 to 126; these read LSSKKKFNLNTPSFQPSVSNL and FKPENGVSEPDTVDSPTTQRP. The tract at residues 106–240 is disordered; the sequence is FKPENGVSEP…SAPTPGSETP (135 aa). Residues 119–153 are compositionally biased toward polar residues; it reads DSPTTQRPFTSKRFNVSTPSFTPTNFDFANNSNAD. The span at 172 to 187 shows a compositional bias: low complexity; it reads QNQQQQQQQQQQQQKQ. The segment covering 212–224 has biased composition (polar residues); that stretch reads GVSQSSPSTNPYF. A pseudokinase domain region spans residues 308-576; the sequence is QSLSHSNLPE…DLNEFSQRLT (269 aa). Residues arginine 361, 416–423, and 470–471 each bind ATP; these read DYYPNSIS and SK. The stretch at 577–615 forms a coiled coil; the sequence is PKMFNIIDSLQNSSDFIEGQLTSELENARLFRLMTKLNY. The knob domain stretch occupies residues 616-697; sequence LIHDNSNSEN…IDTKFRLMRE (82 aa).

Belongs to the protein kinase superfamily. PAN3 family. Homodimer. Forms a heterotrimer with a catalytic subunit PAN2 to form the poly(A)-nuclease (PAN) deadenylation complex. Interacts (via PAM-2 motif) with poly(A)-binding protein PAB1 (via PABC domain), conferring substrate specificity of the enzyme complex.

The protein localises to the cytoplasm. Regulatory subunit of the poly(A)-nuclease (PAN) deadenylation complex, one of two cytoplasmic mRNA deadenylases involved in mRNA turnover. PAN specifically shortens poly(A) tails of RNA and the activity is stimulated by poly(A)-binding protein PAB1. PAN deadenylation is followed by rapid degradation of the shortened mRNA tails by the CCR4-NOT complex. Deadenylated mRNAs are then degraded by two alternative mechanisms, namely exosome-mediated 3'-5' exonucleolytic degradation, or deadenylation-dependent mRNA decaping and subsequent 5'-3' exonucleolytic degradation by XRN1. May also be involved in post-transcriptional maturation of mRNA poly(A) tails. PAN3 acts as a positive regulator for PAN activity, recruiting the catalytic subunit PAN2 to mRNA via its interaction with RNA and with PAB1. This Candida albicans (strain SC5314 / ATCC MYA-2876) (Yeast) protein is PAN2-PAN3 deadenylation complex subunit PAN3.